The sequence spans 223 residues: NAD(P)H-hydrate epimerase (223 aa).

The YjeF N-terminal domain maps to Ala-9–Leu-211. A (6S)-NADPHX-binding site is contributed by Asn-60–Asp-64. The K(+) site is built by Asn-61 and Asp-120. (6S)-NADPHX is bound by residues Gly-124–Pro-130 and Asp-153. Ser-156 lines the K(+) pocket.

The protein belongs to the NnrE/AIBP family. The cofactor is K(+).

It catalyses the reaction (6R)-NADHX = (6S)-NADHX. The enzyme catalyses (6R)-NADPHX = (6S)-NADPHX. Its function is as follows. Catalyzes the epimerization of the S- and R-forms of NAD(P)HX, a damaged form of NAD(P)H that is a result of enzymatic or heat-dependent hydration. This is a prerequisite for the S-specific NAD(P)H-hydrate dehydratase to allow the repair of both epimers of NAD(P)HX. This chain is NAD(P)H-hydrate epimerase, found in Entamoeba histolytica (strain ATCC 30459 / HM-1:IMSS / ABRM).